Reading from the N-terminus, the 859-residue chain is DNA mismatch repair protein MutS (859 aa).

617-624 (GPNMGGKS) serves as a coordination point for ATP. The tract at residues 799–821 (ETTSLPHEQPRAKPGKPAVPQQS) is disordered.

Belongs to the DNA mismatch repair MutS family.

This protein is involved in the repair of mismatches in DNA. It is possible that it carries out the mismatch recognition step. This protein has a weak ATPase activity. This is DNA mismatch repair protein MutS from Pseudomonas syringae pv. syringae (strain B728a).